The following is a 105-amino-acid chain: Large ribosomal subunit protein eL30 (105 aa).

The protein belongs to the eukaryotic ribosomal protein eL30 family.

The sequence is that of Large ribosomal subunit protein eL30 (rpl30e) from Methanococcus vannielii (strain ATCC 35089 / DSM 1224 / JCM 13029 / OCM 148 / SB).